We begin with the raw amino-acid sequence, 249 residues long: FMN reductase (NADPH) (249 aa).

This sequence belongs to the flavin oxidoreductase frp family. In terms of assembly, homodimer.

The catalysed reaction is FMNH2 + NADP(+) = FMN + NADPH + 2 H(+). Reduces FMNH(2) to FMN, with NADPH as reductant. It also reduces nitroaromatic compounds, quinones and azo dyes. In Bacillus subtilis (strain 168), this protein is FMN reductase (NADPH) (nfrA1).